Consider the following 664-residue polypeptide: Macrolide export ATP-binding/permease protein MacB (664 aa).

Residues 8–246 (LEVHNLVREF…ELNKDPDAAP (239 aa)) form the ABC transporter domain. 44 to 51 (GQSGSGKS) lines the ATP pocket. Transmembrane regions (helical) follow at residues 287-307 (FLTM…VALG), 543-563 (IAVI…LVSV), 587-607 (FLIE…LLSL), and 629-649 (SIVA…FLPA).

This sequence belongs to the ABC transporter superfamily. Macrolide exporter (TC 3.A.1.122) family. As to quaternary structure, homodimer. Part of the tripartite efflux system MacAB-TolC, which is composed of an inner membrane transporter, MacB, a periplasmic membrane fusion protein, MacA, and an outer membrane component, TolC. The complex forms a large protein conduit and can translocate molecules across both the inner and outer membranes. Interacts with MacA.

The protein localises to the cell inner membrane. Functionally, part of the tripartite efflux system MacAB-TolC. MacB is a non-canonical ABC transporter that contains transmembrane domains (TMD), which form a pore in the inner membrane, and an ATP-binding domain (NBD), which is responsible for energy generation. Confers resistance against macrolides. The polypeptide is Macrolide export ATP-binding/permease protein MacB (Acinetobacter baylyi (strain ATCC 33305 / BD413 / ADP1)).